A 512-amino-acid polypeptide reads, in one-letter code: Cytochrome P450 76C2 (512 aa).

The chain crosses the membrane as a helical span at residues 3 to 23 (IIFEQALFPLFCFVLSFFIIF). Heme is bound at residue Cys-451.

The protein belongs to the cytochrome P450 family. It depends on heme as a cofactor.

The protein resides in the membrane. This is Cytochrome P450 76C2 (CYP76C2) from Arabidopsis thaliana (Mouse-ear cress).